Consider the following 252-residue polypeptide: Streptothricin hydrolase (252 aa).

Cys-158 (nucleophile) is an active-site residue. Residues Ala-230–Ser-242 are compositionally biased toward low complexity. Positions Ala-230–Arg-252 are disordered. Pro residues predominate over residues Pro-243–Arg-252.

It belongs to the isochorismatase family.

It catalyses the reaction streptothricin F + H2O = streptothricin F acid. Catalyzes the hydrolysis of the amide bond of streptolidine lactam, thereby conferring streptothricin (ST) resistance. Can hydrolyze streptothricin-F and streptothricin-D. However, this strain is believed to be a ST nonproducer, which raises the possibility that its true role may not be its involvement in self-resistance to STs. May catalyze the hydrolysis of naturally occurring cyclic amide compounds that are structurally related to STs. In Streptomyces noursei (Streptomyces albulus), this protein is Streptothricin hydrolase (sttH).